The following is a 481-amino-acid chain: (S)-N-methylcoclaurine 3'-hydroxylase isozyme 1 (481 aa).

Residue Cys-423 participates in heme binding.

Belongs to the cytochrome P450 family. Heme is required as a cofactor. As to expression, restricted to the parietal region of sieve elements adjacent or proximal to laticifers in roots, stems, leaves, carpels and hypocotyls.

It is found in the endoplasmic reticulum. The catalysed reaction is (S)-N-methylcoclaurine + reduced [NADPH--hemoprotein reductase] + O2 = (S)-3'-hydroxy-N-methylcoclaurine + oxidized [NADPH--hemoprotein reductase] + H2O + H(+). Its pathway is alkaloid biosynthesis; (S)-reticuline biosynthesis; (S)-reticuline from (S)-norcoclaurine: step 3/4. Cytochrome P450 monooxygenase involved in the biosynthesis of benzylisoquinoline alkaloids. Catalyzes the 3'-hydroxylation of (S)-N-methylcoclaurine. The chain is (S)-N-methylcoclaurine 3'-hydroxylase isozyme 1 from Papaver somniferum (Opium poppy).